A 201-amino-acid chain; its full sequence is dTTP/UTP pyrophosphatase (201 aa).

Catalysis depends on Asp-75, which acts as the Proton acceptor.

It belongs to the Maf family. YhdE subfamily. A divalent metal cation serves as cofactor.

It is found in the cytoplasm. It catalyses the reaction dTTP + H2O = dTMP + diphosphate + H(+). It carries out the reaction UTP + H2O = UMP + diphosphate + H(+). Nucleoside triphosphate pyrophosphatase that hydrolyzes dTTP and UTP. May have a dual role in cell division arrest and in preventing the incorporation of modified nucleotides into cellular nucleic acids. This is dTTP/UTP pyrophosphatase from Pseudomonas fluorescens (strain ATCC BAA-477 / NRRL B-23932 / Pf-5).